Reading from the N-terminus, the 115-residue chain is Tail tip protein M (115 aa).

It belongs to the lambda-like tail tip protein M family.

It localises to the virion. It is found in the host cytoplasm. In terms of biological role, part of the distal tail tip which plays a role in DNA ejection during entry, and in tail assembly initiation during exit. May bind tail tip complex associated with tape measure protein and allow tail tube protein polymerization on top of tail tip. The sequence is that of Tail tip protein M from Escherichia coli (Bacteriophage N15).